The sequence spans 129 residues: Iron-sulfur cluster assembly 1 homolog, mitochondrial (129 aa).

The transit peptide at 1–12 (MSASLVRATVRA) directs the protein to the mitochondrion. Positions 57, 121, and 123 each coordinate Fe cation.

This sequence belongs to the HesB/IscA family. Interacts with CRY2, but not with CRY1 (in vitro).

The protein resides in the mitochondrion. Functionally, involved in the maturation of mitochondrial 4Fe-4S proteins functioning late in the iron-sulfur cluster assembly pathway. Probably involved in the binding of an intermediate of Fe/S cluster assembly. The sequence is that of Iron-sulfur cluster assembly 1 homolog, mitochondrial (ISCA1) from Bos taurus (Bovine).